The sequence spans 307 residues: D-alanine--D-alanine ligase (307 aa).

Residues 108 to 301 (KEVFAAAGLP…FPEFCAWMVE (194 aa)) form the ATP-grasp domain. 135-185 (LPPPYVVKPNCEGSSVGVYIVQADANGPPRLAPDMPRDLMVETYIPGRELT) contributes to the ATP binding site. Residues Asp252, Glu268, and Asn270 each coordinate Mg(2+).

This sequence belongs to the D-alanine--D-alanine ligase family. It depends on Mg(2+) as a cofactor. Requires Mn(2+) as cofactor.

It is found in the cytoplasm. It catalyses the reaction 2 D-alanine + ATP = D-alanyl-D-alanine + ADP + phosphate + H(+). It functions in the pathway cell wall biogenesis; peptidoglycan biosynthesis. Functionally, cell wall formation. The polypeptide is D-alanine--D-alanine ligase (Cereibacter sphaeroides (strain ATCC 17025 / ATH 2.4.3) (Rhodobacter sphaeroides)).